Consider the following 597-residue polypeptide: K(+) efflux antiporter 6 (597 aa).

The first 35 residues, methionine 1–proline 35, serve as a signal peptide directing secretion. Transmembrane regions (helical) follow at residues leucine 177–cysteine 197, proline 201–isoleucine 221, methionine 224–leucine 244, valine 257–valine 277, glycine 287–methionine 307, isoleucine 321–leucine 341, methionine 351–leucine 371, leucine 396–leucine 416, isoleucine 440–asparagine 460, valine 461–isoleucine 481, threonine 499–serine 519, and leucine 543–leucine 563.

The protein belongs to the monovalent cation:proton antiporter 2 (CPA2) transporter (TC 2.A.37) family. KEA (TC 2.A.37.1) subfamily. As to expression, expressed in roots, stems, leaves, flowers and silique.

It is found in the golgi apparatus membrane. The protein localises to the golgi apparatus. The protein resides in the trans-Golgi network membrane. Its subcellular location is the prevacuolar compartment membrane. It localises to the endomembrane system. It catalyses the reaction K(+)(in) + H(+)(out) = K(+)(out) + H(+)(in). Its function is as follows. Electroneutral K(+)/H(+) efflux antiporter involved in K(+) homeostasis and osmotic adjustment. Together with KEA4 and KEA5, promotes growth and development, and facilitates endosomal pH and ions homeostasis, as well as salt tolerance (e.g. K(+), NaCl and LiCl), probably by supporting cell wall biosynthesis during rapid etiolated seedling growth. The sequence is that of K(+) efflux antiporter 6 from Arabidopsis thaliana (Mouse-ear cress).